We begin with the raw amino-acid sequence, 88 residues long: Putative regulatory protein PCC7424_3427 (88 aa).

Belongs to the RemA family.

In Gloeothece citriformis (strain PCC 7424) (Cyanothece sp. (strain PCC 7424)), this protein is Putative regulatory protein PCC7424_3427.